Consider the following 328-residue polypeptide: 3-dehydroquinate synthase (328 aa).

Belongs to the archaeal-type DHQ synthase family.

It carries out the reaction 2-amino-2,3,7-trideoxy-D-lyxo-hept-6-ulosonate + NAD(+) + H2O = 3-dehydroquinate + NH4(+) + NADH + H(+). Catalyzes the oxidative deamination and cyclization of 2-amino-3,7-dideoxy-D-threo-hept-6-ulosonic acid (ADH) to yield 3-dehydroquinate (DHQ), which is fed into the canonical shikimic pathway of aromatic amino acid biosynthesis. In Methanospirillum hungatei JF-1 (strain ATCC 27890 / DSM 864 / NBRC 100397 / JF-1), this protein is 3-dehydroquinate synthase.